A 322-amino-acid chain; its full sequence is tRNA U34 carboxymethyltransferase (322 aa).

Residues Lys92, Trp106, Lys111, Gly131, 153–155, 181–182, Met196, Tyr200, and Arg315 contribute to the carboxy-S-adenosyl-L-methionine site; these read DPS and VE.

This sequence belongs to the class I-like SAM-binding methyltransferase superfamily. CmoB family. As to quaternary structure, homotetramer.

It catalyses the reaction carboxy-S-adenosyl-L-methionine + 5-hydroxyuridine(34) in tRNA = 5-carboxymethoxyuridine(34) in tRNA + S-adenosyl-L-homocysteine + H(+). Its function is as follows. Catalyzes carboxymethyl transfer from carboxy-S-adenosyl-L-methionine (Cx-SAM) to 5-hydroxyuridine (ho5U) to form 5-carboxymethoxyuridine (cmo5U) at position 34 in tRNAs. This chain is tRNA U34 carboxymethyltransferase, found in Pseudoalteromonas translucida (strain TAC 125).